Consider the following 217-residue polypeptide: Pre-mRNA-splicing factor sap62 (217 aa).

The segment at 54–84 (FECRLCLTTHANENSYLTHTQGKKHQTNLAR) adopts a Matrin-type zinc-finger fold.

This sequence belongs to the SF3A2 family. Belongs to the 40S cdc5-associated complex (or cwf complex), a spliceosome sub-complex reminiscent of a late-stage spliceosome composed of the U2, U5 and U6 snRNAs and at least brr2, cdc5, cwf2/prp3, cwf3/syf1, cwf4/syf3, cwf5/ecm2, spp42/cwf6, cwf7/spf27, cwf8, cwf9, cwf10, cwf11, cwf12, prp45/cwf13, cwf14, cwf15, cwf16, cwf17, cwf18, cwf19, cwf20, cwf21, cwf22, cwf23, cwf24, cwf25, cwf26, cyp7/cwf27, cwf28, cwf29/ist3, lea1, msl1, prp5/cwf1, prp10, prp12/sap130, prp17, prp22, sap61, sap62, sap114, sap145, slu7, smb1, smd1, smd3, smf1, smg1 and syf2.

The protein resides in the nucleus. It localises to the cytoplasm. Functionally, involved in mRNA splicing where it associates with cdc5 and the other cwf proteins as part of the spliceosome. The sequence is that of Pre-mRNA-splicing factor sap62 (sap62) from Schizosaccharomyces pombe (strain 972 / ATCC 24843) (Fission yeast).